A 494-amino-acid polypeptide reads, in one-letter code: Maintenance of mitochondrial morphology protein 1 (494 aa).

The Lumenal portion of the chain corresponds to 1–25; that stretch reads MGDDQSLRSTVAENDISANLSFTQG. Residues 26–46 traverse the membrane as a helical segment; that stretch reads FLLGQLSVVLLIGAFIKFFIF. The Cytoplasmic segment spans residues 47-494; that stretch reads GEAPPPPSRG…GTLPGGAAAN (448 aa). 3 disordered regions span residues 53 to 99, 278 to 330, and 395 to 494; these read PSRG…VPSS, PPLH…KSNV, and RTGV…AAAN. The span at 57 to 67 shows a compositional bias: basic residues; sequence LSHRASTHRRS. Composition is skewed to polar residues over residues 68–81 and 88–99; these read NSIY…GTSR and STSNVLRPVPSS. In terms of domain architecture, SMP-LTD spans 134 to 387; the sequence is QPESLDWFNV…EPRVQVVGLP (254 aa). Positions 278–290 are enriched in pro residues; it reads PPLHTPSPSPSPP. Composition is skewed to polar residues over residues 300-318 and 406-415; these read THPT…NAQE and TGSNAASRSA. Over residues 425–437 the composition is skewed to basic and acidic residues; the sequence is RADDIGREPDGLR.

This sequence belongs to the MMM1 family. Homodimer. Component of the ER-mitochondria encounter structure (ERMES) or MDM complex, composed of mmm1, mdm10, mdm12 and mdm34. A mmm1 homodimer associates with one molecule of mdm12 on each side in a pairwise head-to-tail manner, and the SMP-LTD domains of mmm1 and mdm12 generate a continuous hydrophobic tunnel for phospholipid trafficking.

The protein localises to the endoplasmic reticulum membrane. In terms of biological role, component of the ERMES/MDM complex, which serves as a molecular tether to connect the endoplasmic reticulum (ER) and mitochondria. Components of this complex are involved in the control of mitochondrial shape and protein biogenesis, and function in nonvesicular lipid trafficking between the ER and mitochondria. The mdm12-mmm1 subcomplex functions in the major beta-barrel assembly pathway that is responsible for biogenesis of all outer membrane beta-barrel proteins, and acts in a late step after the SAM complex. The mdm10-mdm12-mmm1 subcomplex further acts in the TOM40-specific pathway after the action of the mdm12-mmm1 complex. Essential for establishing and maintaining the structure of mitochondria and maintenance of mtDNA nucleoids. This is Maintenance of mitochondrial morphology protein 1 from Aspergillus oryzae (strain ATCC 42149 / RIB 40) (Yellow koji mold).